A 391-amino-acid chain; its full sequence is Probable malate dehydrogenase 1 (391 aa).

An NAD(+)-binding site is contributed by 68–74 (GAAGQIA). Substrate-binding residues include Arg149 and Arg155. NAD(+)-binding positions include Asn162, Gln169, and 186–188 (VGN). The substrate site is built by Asn188 and Arg219. Residue His244 is the Proton acceptor of the active site.

It belongs to the LDH/MDH superfamily. MDH type 2 family. In terms of assembly, homodimer.

The enzyme catalyses (S)-malate + NAD(+) = oxaloacetate + NADH + H(+). Its function is as follows. Catalyzes the reversible oxidation of malate to oxaloacetate. This chain is Probable malate dehydrogenase 1 (mdhA), found in Dictyostelium discoideum (Social amoeba).